Here is a 184-residue protein sequence, read N- to C-terminus: Putative axial regulator YABBY 2 (184 aa).

The C4-type zinc finger occupies 15–42; that stretch reads CSFCTTILAVSVPYASLFTLVTVRCGHC. Composition is skewed to polar residues over residues 76 to 94 and 171 to 184; these read LVTRKDCASSSRSTNNLSE and LDQSVAGQKSNGYY. Disordered stretches follow at residues 76–115 and 162–184; these read LVTRKDCASSSRSTNNLSENIDREAPRMPPIRPPEKRQRV and LDGNKKGKQLDQSVAGQKSNGYY.

The protein belongs to the YABBY family. In terms of assembly, interacts with SPL/NZZ and SPEAR2. As to expression, expressed at low levels in abaxial regions of lateral aerial organ primordia leading to cotyledons, leaves, flower meristems, sepals, petals, stamen and carpels, but not in roots.

It is found in the nucleus. Involved in the abaxial cell fate determination during embryogenesis and organogenesis. The chain is Putative axial regulator YABBY 2 (YAB2) from Arabidopsis thaliana (Mouse-ear cress).